The sequence spans 362 residues: Peptide chain release factor 1 (362 aa).

Position 237 is an N5-methylglutamine (Gln237). Residues 289-308 (AAEISDTRRNLLGSGDRSDR) are disordered.

It belongs to the prokaryotic/mitochondrial release factor family. Post-translationally, methylated by PrmC. Methylation increases the termination efficiency of RF1.

Its subcellular location is the cytoplasm. In terms of biological role, peptide chain release factor 1 directs the termination of translation in response to the peptide chain termination codons UAG and UAA. The sequence is that of Peptide chain release factor 1 from Vibrio cholerae serotype O1 (strain ATCC 39541 / Classical Ogawa 395 / O395).